The chain runs to 732 residues: MLRLLRLLLLLLLPPPGSPEPPEPPGLAQLSPGSPPQAPDLLYADGLRAYSAGAWAPAVALLREALRSRAALGRARQECGASCAAEPGAALPSQLLGAPHPVSGPGVWEPLLLRATLRRAECLTQCAVRRLGPGGAARLRVGSALRDAFRRREPYNYLQRAYYQLKKLDLAASAAHTFFVANPTHLQMREDMAKYRRMSAIRPQSFRDLVTPLYWAAYDTGLELLEQREAALALPQLEEALQGSLAHMESCRAACEGPEEHQGAEEEGEGSQGGLYEAIAGHWIRVLQCRQHCVADTATRPGRSFPVQDFLLSQLRRLHEAYAQVGNMSQAMENVLSVLLFYPEDEAAKKALNQYQTQLGEPRPDLGPREDIQRFILRSLGEKRQLYYAMEHLGTSFKDPDSWTPEALIPKALRERLREDQEKKPWDHQPPQQKPLAHWKDALLMEGVTLTQDAQQLNGSERAVLDGLLTSAECGVLLQLAKDAAQAGARSGYRGRRSPHSPHERFEGLTVLKAAQLARAGTVGRPGAKLLLEVSERVRTLTQAYFSPERPLHLSFTHLVCRSAIEGEQEQRMDLSHPVHADNCVLDPDTGECWREPPAYTYRDYSGLLYLNDDFKGGDLFFTQPNALTVTAQVRPRCGRLVAFSSGGENPHGVWAVTRGRRCALALWHTWAPEHSEQEWTEAKELLQEEEEEEEEEDILSRDPSPEPPSHKLQRVQEKAGKPRRVRVREEL.

The signal sequence occupies residues 1–19; the sequence is MLRLLRLLLLLLLPPPGSP. Over residues 15–25 the composition is skewed to pro residues; that stretch reads PPGSPEPPEPP. The disordered stretch occupies residues 15-35; sequence PPGSPEPPEPPGLAQLSPGSP. TPR repeat units lie at residues 39-72, 152-185, 214-247, and 312-345; these read PDLL…RAAL, REPY…NPTH, YWAA…SLAH, and LSQL…YPED. N-linked (GlcNAc...) asparagine glycosylation is found at Asn-327 and Asn-458. The Fe2OG dioxygenase domain occupies 557–671; it reads THLVCRSAIE…RCALALWHTW (115 aa). Residues His-580, Asp-582, and His-652 each contribute to the Fe cation site. Arg-662 is a catalytic residue. The stretch at 674 to 703 forms a coiled coil; it reads EHSEQEWTEAKELLQEEEEEEEEEDILSRD. Residues 676–687 are compositionally biased toward basic and acidic residues; sequence SEQEWTEAKELL. The tract at residues 676–732 is disordered; sequence SEQEWTEAKELLQEEEEEEEEEDILSRDPSPEPPSHKLQRVQEKAGKPRRVRVREEL. Residues 688–698 are compositionally biased toward acidic residues; sequence QEEEEEEEEED. Over residues 722–732 the composition is skewed to basic residues; the sequence is KPRRVRVREEL. Residues 729-732 carry the Prevents secretion from ER motif; sequence REEL.

The protein belongs to the leprecan family. As to quaternary structure, identified in a complex with PLOD1 and P3H4. The cofactor is Fe cation. Requires L-ascorbate as cofactor. Detected in kidney (at protein level).

Its subcellular location is the endoplasmic reticulum. It carries out the reaction L-prolyl-[collagen] + 2-oxoglutarate + O2 = trans-3-hydroxy-L-prolyl-[collagen] + succinate + CO2. In terms of biological role, part of a complex composed of PLOD1, P3H3 and P3H4 that catalyzes hydroxylation of lysine residues in collagen alpha chains and is required for normal assembly and cross-linkling of collagen fibrils. Required for normal hydroxylation of lysine residues in type I collagen chains in skin, bone, tendon, aorta and cornea. Required for normal skin stability via its role in hydroxylation of lysine residues in collagen alpha chains and in collagen fibril assembly. Apparently not required for normal prolyl 3-hydroxylation on collagen chains, possibly because it functions redundantly with other prolyl 3-hydroxylases. This Mus musculus (Mouse) protein is Prolyl 3-hydroxylase 3.